Reading from the N-terminus, the 641-residue chain is ATP-dependent zinc metalloprotease FtsH 2 (641 aa).

Residues 1–100 lie on the Periplasmic side of the membrane; sequence MLAYYVSVNQ…IDVKVIHNFW (100 aa). Residues 101 to 121 traverse the membrane as a helical segment; the sequence is GQAFLSVLPFLLFILALYFLF. The Cytoplasmic segment spans residues 122–641; it reads RQQIRMAGRG…LLPGLEGAPA (520 aa). Residue 193 to 200 participates in ATP binding; sequence GPPGTGKT. Position 415 (His-415) interacts with Zn(2+). Glu-416 is a catalytic residue. His-419 and Asp-491 together coordinate Zn(2+). The interval 593 to 641 is disordered; sequence KTGKMTNPPSKNSSPVSNGGEASSTKSPARQEETTKDGGLLPGLEGAPA. Low complexity-rich tracts occupy residues 599 to 610 and 630 to 641; these read NPPSKNSSPVSN and GGLLPGLEGAPA.

In the central section; belongs to the AAA ATPase family. The protein in the C-terminal section; belongs to the peptidase M41 family. Homohexamer. Zn(2+) is required as a cofactor.

Its subcellular location is the cell inner membrane. Acts as a processive, ATP-dependent zinc metallopeptidase for both cytoplasmic and membrane proteins. Plays a role in the quality control of integral membrane proteins. The chain is ATP-dependent zinc metalloprotease FtsH 2 from Methylacidiphilum infernorum (isolate V4) (Methylokorus infernorum (strain V4)).